A 417-amino-acid polypeptide reads, in one-letter code: Tyrosine--tRNA ligase (417 aa).

Tyrosine 39 provides a ligand contact to L-tyrosine. Positions 44-53 (PTASSLHAGS) match the 'HIGH' region motif. L-tyrosine contacts are provided by tyrosine 176 and glutamine 180. The short motif at 236–240 (KMGKS) is the 'KMSKS' region element. ATP is bound at residue lysine 239. The 68-residue stretch at 350 to 417 (AGLLALLVQA…KKKHVLIKPL (68 aa)) folds into the S4 RNA-binding domain.

This sequence belongs to the class-I aminoacyl-tRNA synthetase family. TyrS type 1 subfamily. In terms of assembly, homodimer.

The protein localises to the cytoplasm. The catalysed reaction is tRNA(Tyr) + L-tyrosine + ATP = L-tyrosyl-tRNA(Tyr) + AMP + diphosphate + H(+). Catalyzes the attachment of tyrosine to tRNA(Tyr) in a two-step reaction: tyrosine is first activated by ATP to form Tyr-AMP and then transferred to the acceptor end of tRNA(Tyr). The polypeptide is Tyrosine--tRNA ligase (Bartonella quintana (strain Toulouse) (Rochalimaea quintana)).